Reading from the N-terminus, the 320-residue chain is Cytochrome f (320 aa).

Residues 1–35 (MHTKNLFYSRTQQITQYLSALLMMVILTRTSISSA) form the signal peptide. The heme site is built by Tyr36, Cys56, Cys59, and His60. The helical transmembrane segment at 286–306 (VQVLLFFFASIILAQIFLVLK) threads the bilayer.

The protein belongs to the cytochrome f family. In terms of assembly, the 4 large subunits of the cytochrome b6-f complex are cytochrome b6, subunit IV (17 kDa polypeptide, petD), cytochrome f and the Rieske protein, while the 4 small subunits are PetG, PetL, PetM and PetN. The complex functions as a dimer. It depends on heme as a cofactor.

The protein localises to the plastid thylakoid membrane. In terms of biological role, component of the cytochrome b6-f complex, which mediates electron transfer between photosystem II (PSII) and photosystem I (PSI), cyclic electron flow around PSI, and state transitions. This Cuscuta gronovii (Common dodder) protein is Cytochrome f.